Consider the following 346-residue polypeptide: Dihydroorotase (346 aa).

Positions 13 and 15 each coordinate Zn(2+). Residues 15–17 and asparagine 41 contribute to the substrate site; that span reads HLR. The Zn(2+) site is built by lysine 99, histidine 136, and histidine 174. Lysine 99 bears the N6-carboxylysine mark. Histidine 136 is a binding site for substrate. Leucine 219 is a substrate binding site. Aspartate 247 contacts Zn(2+). The active site involves aspartate 247. 2 residues coordinate substrate: histidine 251 and alanine 263.

Belongs to the metallo-dependent hydrolases superfamily. DHOase family. Class II DHOase subfamily. As to quaternary structure, homodimer. Zn(2+) serves as cofactor.

It carries out the reaction (S)-dihydroorotate + H2O = N-carbamoyl-L-aspartate + H(+). It participates in pyrimidine metabolism; UMP biosynthesis via de novo pathway; (S)-dihydroorotate from bicarbonate: step 3/3. Functionally, catalyzes the reversible cyclization of carbamoyl aspartate to dihydroorotate. This Rhizobium rhizogenes (strain K84 / ATCC BAA-868) (Agrobacterium radiobacter) protein is Dihydroorotase.